Reading from the N-terminus, the 162-residue chain is Putative ureidoglycolate lyase (162 aa).

It belongs to the ureidoglycolate lyase family. In terms of assembly, homodimer. Requires Ni(2+) as cofactor.

The enzyme catalyses (S)-ureidoglycolate = urea + glyoxylate. Its pathway is nitrogen metabolism; (S)-allantoin degradation. Its function is as follows. Catalyzes the catabolism of the allantoin degradation intermediate (S)-ureidoglycolate, generating urea and glyoxylate. Involved in the utilization of allantoin as nitrogen source. The chain is Putative ureidoglycolate lyase from Agrobacterium fabrum (strain C58 / ATCC 33970) (Agrobacterium tumefaciens (strain C58)).